The sequence spans 55 residues: Large ribosomal subunit protein bL33 (55 aa).

The protein belongs to the bacterial ribosomal protein bL33 family.

The polypeptide is Large ribosomal subunit protein bL33 (Bartonella bacilliformis (strain ATCC 35685 / KC583 / Herrer 020/F12,63)).